Reading from the N-terminus, the 429-residue chain is Oxysterol-binding protein-like protein OBPalpha (429 aa).

Belongs to the OSBP family.

This is Oxysterol-binding protein-like protein OBPalpha (OBPALPHA) from Candida albicans (strain SC5314 / ATCC MYA-2876) (Yeast).